Consider the following 492-residue polypeptide: UDP-N-acetylmuramoyl-L-alanyl-D-glutamate--2,6-diaminopimelate ligase (492 aa).

Ser30 provides a ligand contact to UDP-N-acetyl-alpha-D-muramoyl-L-alanyl-D-glutamate. Residue 114-120 (GTNGKTS) coordinates ATP. UDP-N-acetyl-alpha-D-muramoyl-L-alanyl-D-glutamate-binding positions include 156 to 157 (TT), Ser183, Gln189, and Arg191. At Lys223 the chain carries N6-carboxylysine. Meso-2,6-diaminopimelate contacts are provided by residues Arg389, 413 to 416 (DNPR), Gly462, and Glu466. The Meso-diaminopimelate recognition motif signature appears at 413–416 (DNPR).

This sequence belongs to the MurCDEF family. MurE subfamily. The cofactor is Mg(2+). Post-translationally, carboxylation is probably crucial for Mg(2+) binding and, consequently, for the gamma-phosphate positioning of ATP.

It is found in the cytoplasm. The catalysed reaction is UDP-N-acetyl-alpha-D-muramoyl-L-alanyl-D-glutamate + meso-2,6-diaminopimelate + ATP = UDP-N-acetyl-alpha-D-muramoyl-L-alanyl-gamma-D-glutamyl-meso-2,6-diaminopimelate + ADP + phosphate + H(+). Its pathway is cell wall biogenesis; peptidoglycan biosynthesis. Its function is as follows. Catalyzes the addition of meso-diaminopimelic acid to the nucleotide precursor UDP-N-acetylmuramoyl-L-alanyl-D-glutamate (UMAG) in the biosynthesis of bacterial cell-wall peptidoglycan. This chain is UDP-N-acetylmuramoyl-L-alanyl-D-glutamate--2,6-diaminopimelate ligase, found in Neisseria meningitidis serogroup A / serotype 4A (strain DSM 15465 / Z2491).